Here is a 125-residue protein sequence, read N- to C-terminus: Upsalin (125 aa).

A signal peptide spans 1 to 16 (MFPTHVLLIVIACVTA).

Weakly glycosylated. Expressed at highest levels in mantle, followed by adductor muscle. Found in the nacreous shell layer (at protein level).

The protein localises to the secreted. In Unio pictorum (Painter's mussel), this protein is Upsalin.